Reading from the N-terminus, the 148-residue chain is Large-conductance mechanosensitive channel (148 aa).

2 consecutive transmembrane segments (helical) span residues 16–36 (VMDLAVGVIIGGAFSTIVNSI) and 89–109 (GSFITVLINFLILAFIIFLMV).

It belongs to the MscL family. As to quaternary structure, homopentamer.

The protein resides in the cell inner membrane. Its function is as follows. Channel that opens in response to stretch forces in the membrane lipid bilayer. May participate in the regulation of osmotic pressure changes within the cell. The polypeptide is Large-conductance mechanosensitive channel (Paraburkholderia xenovorans (strain LB400)).